Here is a 140-residue protein sequence, read N- to C-terminus: Probable glycine cleavage system H protein (140 aa).

A Lipoyl-binding domain is found at 22–114 (RAIIGITSYA…YEEGWIVVLE (93 aa)). Residue lysine 63 is modified to N6-lipoyllysine.

The protein belongs to the GcvH family. In terms of assembly, the glycine cleavage system is composed of four proteins: P, T, L and H. The cofactor is (R)-lipoate.

In terms of biological role, the glycine cleavage system catalyzes the degradation of glycine. The H protein shuttles the methylamine group of glycine from the P protein to the T protein. The chain is Probable glycine cleavage system H protein from Korarchaeum cryptofilum (strain OPF8).